A 214-amino-acid chain; its full sequence is NADH-quinone oxidoreductase subunit C (214 aa).

This sequence belongs to the complex I 30 kDa subunit family. In terms of assembly, NDH-1 is composed of 14 different subunits. Subunits NuoB, C, D, E, F, and G constitute the peripheral sector of the complex.

It localises to the cell inner membrane. The catalysed reaction is a quinone + NADH + 5 H(+)(in) = a quinol + NAD(+) + 4 H(+)(out). In terms of biological role, NDH-1 shuttles electrons from NADH, via FMN and iron-sulfur (Fe-S) centers, to quinones in the respiratory chain. The immediate electron acceptor for the enzyme in this species is believed to be ubiquinone. Couples the redox reaction to proton translocation (for every two electrons transferred, four hydrogen ions are translocated across the cytoplasmic membrane), and thus conserves the redox energy in a proton gradient. In Francisella tularensis subsp. tularensis (strain WY96-3418), this protein is NADH-quinone oxidoreductase subunit C.